Consider the following 454-residue polypeptide: MSLKGNDKELHLVMFPFFAFGHITPFVQLSNKISSLYPGVKITFLAASASVSRIETMLNPSTNTKVIPLTLPRVDGLPEGVENTADASPATIGLLVVAIDLMQPQIKTLLANLKPDFVIFDFVHWWLPEIASELGIKTIYFSVYMANIVMPSTSKLTGNKPSTVEDIKALQQSYGIPVKTFEAISLMNVFKSFHDWMDKCINGCNLMLIKSCREMEGSRIDDVTKQSTRPVFLIGPVVPEPHSGELDETWANWLNRFPAKSVIYCSFGSETFLTDDQIRELALGLELTGLPFFLVLNFPANVDKSAELKRTLPDGFLERVKDKGIVHSGWVQQRHILAHDSVGCYVFHAGYGSVIEGLVNDCQLVMLPMKVDQFTNSKVIALELKAGVEVNRRDEDGYFGKDDVFEAVESVMMDTENEPAKSIRENHRKLKEFLQNDEIQKKYIADFVENLKAL.

Residues Ser269, 330–331 (WV), 348–356 (HAGYGSVIE), and 370–373 (KVDQ) contribute to the UDP-alpha-D-glucose site.

Belongs to the UDP-glycosyltransferase family.

May glycosylate diterpenes or flavonols in leaves. This chain is UDP-glycosyltransferase 79A2, found in Stevia rebaudiana (Stevia).